Here is a 180-residue protein sequence, read N- to C-terminus: ATP synthase subunit delta (180 aa).

This sequence belongs to the ATPase delta chain family. As to quaternary structure, F-type ATPases have 2 components, F(1) - the catalytic core - and F(0) - the membrane proton channel. F(1) has five subunits: alpha(3), beta(3), gamma(1), delta(1), epsilon(1). F(0) has three main subunits: a(1), b(2) and c(10-14). The alpha and beta chains form an alternating ring which encloses part of the gamma chain. F(1) is attached to F(0) by a central stalk formed by the gamma and epsilon chains, while a peripheral stalk is formed by the delta and b chains.

It localises to the cell inner membrane. Its function is as follows. F(1)F(0) ATP synthase produces ATP from ADP in the presence of a proton or sodium gradient. F-type ATPases consist of two structural domains, F(1) containing the extramembraneous catalytic core and F(0) containing the membrane proton channel, linked together by a central stalk and a peripheral stalk. During catalysis, ATP synthesis in the catalytic domain of F(1) is coupled via a rotary mechanism of the central stalk subunits to proton translocation. Functionally, this protein is part of the stalk that links CF(0) to CF(1). It either transmits conformational changes from CF(0) to CF(1) or is implicated in proton conduction. This chain is ATP synthase subunit delta, found in Geobacter sp. (strain M21).